A 701-amino-acid chain; its full sequence is Ubiquitin thioesterase zranb1-A (701 aa).

3 consecutive RanBP2-type zinc fingers follow at residues 3 to 33, 79 to 108, and 143 to 173; these read EHGI…PRPS, PSSK…QRRT, and IKGQ…PTPN. The Zn(2+) site is built by Cys-10, Cys-13, Cys-24, Cys-27, Cys-85, Cys-88, Cys-99, and Cys-102. Polar residues predominate over residues 108–121; that stretch reads TRSPTESPQSSGSG. The tract at residues 108 to 129 is disordered; sequence TRSPTESPQSSGSGLRSIPSPI. Zn(2+) is bound by residues Cys-150, Cys-153, Cys-164, and Cys-167. The tract at residues 198-219 is disordered; sequence WRGGCSSSNSQRRSPPTSKRDS. The span at 202–214 shows a compositional bias: polar residues; it reads CSSSNSQRRSPPT. 2 ANK repeats span residues 253-283 and 306-333; these read RKTD…SGGD and YTLV…QHAA. The OTU domain occupies 425–585; that stretch reads LYALWNRTAG…RGHFSALVAM (161 aa). Cys-436 acts as the Nucleophile in catalysis. The Proton acceptor role is filled by His-578.

It belongs to the peptidase C64 family.

The protein localises to the cytoplasm. It localises to the nucleus. The catalysed reaction is Thiol-dependent hydrolysis of ester, thioester, amide, peptide and isopeptide bonds formed by the C-terminal Gly of ubiquitin (a 76-residue protein attached to proteins as an intracellular targeting signal).. Ubiquitin thioesterase, which specifically hydrolyzes 'Lys-29'-linked and 'Lys-33'-linked diubiquitin. Also cleaves 'Lys-63'-linked chains, but with 40-fold less efficiency compared to 'Lys-29'-linked ones. Positive regulator of the Wnt signaling pathway that deubiquitinates apc protein, a negative regulator of Wnt-mediated transcription. Acts as a regulator of autophagy by mediating deubiquitination of pik3c3/vps34, thereby promoting autophagosome maturation. Plays a role in the regulation of cell morphology and cytoskeletal organization. Required in the stress fiber dynamics and cell migration. The polypeptide is Ubiquitin thioesterase zranb1-A (zranb1-a) (Xenopus laevis (African clawed frog)).